Reading from the N-terminus, the 101-residue chain is NAD(P)H-quinone oxidoreductase subunit 4L, chloroplastic (101 aa).

Helical transmembrane passes span 2 to 22, 32 to 52, and 61 to 81; these read MFEY…YGLI, MCLE…SDLF, and IFSI…PAIV.

It belongs to the complex I subunit 4L family. NDH is composed of at least 16 different subunits, 5 of which are encoded in the nucleus.

The protein resides in the plastid. The protein localises to the chloroplast thylakoid membrane. It catalyses the reaction a plastoquinone + NADH + (n+1) H(+)(in) = a plastoquinol + NAD(+) + n H(+)(out). It carries out the reaction a plastoquinone + NADPH + (n+1) H(+)(in) = a plastoquinol + NADP(+) + n H(+)(out). NDH shuttles electrons from NAD(P)H:plastoquinone, via FMN and iron-sulfur (Fe-S) centers, to quinones in the photosynthetic chain and possibly in a chloroplast respiratory chain. The immediate electron acceptor for the enzyme in this species is believed to be plastoquinone. Couples the redox reaction to proton translocation, and thus conserves the redox energy in a proton gradient. The sequence is that of NAD(P)H-quinone oxidoreductase subunit 4L, chloroplastic from Amborella trichopoda.